The chain runs to 66 residues: Protein I177L (66 aa).

Belongs to the asfivirus I177L family.

The protein resides in the virion. This is Protein I177L from African swine fever virus (isolate Tick/Malawi/Lil 20-1/1983) (ASFV).